We begin with the raw amino-acid sequence, 273 residues long: NAD-dependent protein deacetylase 2 (273 aa).

Residues 1–273 enclose the Deacetylase sirtuin-type domain; sequence MSNAPLANQS…RCEAALAFLL (273 aa). Residues 26–46 and 104–107 contribute to the NAD(+) site; these read GAGC…GNWK and QNVD. Histidine 122 (proton acceptor) is an active-site residue. 4 residues coordinate Zn(2+): cysteine 130, cysteine 133, cysteine 181, and cysteine 184. Residues 221-223, 247-249, and cysteine 265 each bind NAD(+); these read GSS and NLG.

It belongs to the sirtuin family. Class II subfamily. It depends on Zn(2+) as a cofactor.

It localises to the cytoplasm. The enzyme catalyses N(6)-acetyl-L-lysyl-[protein] + NAD(+) + H2O = 2''-O-acetyl-ADP-D-ribose + nicotinamide + L-lysyl-[protein]. Its function is as follows. NAD-dependent protein deacetylase which modulates the activities of several enzymes which are inactive in their acetylated form. The polypeptide is NAD-dependent protein deacetylase 2 (Bradyrhizobium diazoefficiens (strain JCM 10833 / BCRC 13528 / IAM 13628 / NBRC 14792 / USDA 110)).